Here is a 141-residue protein sequence, read N- to C-terminus: Large ribosomal subunit protein uL16 (141 aa).

Positions Met-1–Asn-17 are enriched in basic residues. Residues Met-1–Thr-22 are disordered.

Belongs to the universal ribosomal protein uL16 family. As to quaternary structure, part of the 50S ribosomal subunit.

Binds 23S rRNA and is also seen to make contacts with the A and possibly P site tRNAs. This chain is Large ribosomal subunit protein uL16, found in Campylobacter curvus (strain 525.92).